Reading from the N-terminus, the 192-residue chain is Putative manganese efflux pump MntP (192 aa).

A run of 6 helical transmembrane segments spans residues I2–V22, S41–S61, A62–I82, M109–F129, F136–G156, and G172–F192.

It belongs to the MntP (TC 9.B.29) family.

Its subcellular location is the cell membrane. Functionally, probably functions as a manganese efflux pump. The sequence is that of Putative manganese efflux pump MntP from Bifidobacterium longum subsp. infantis (strain ATCC 15697 / DSM 20088 / JCM 1222 / NCTC 11817 / S12).